A 225-amino-acid chain; its full sequence is Probable 3-keto-L-gulonate-6-phosphate decarboxylase (225 aa).

Aspartate 11 lines the substrate pocket. Positions 33 and 62 each coordinate Mg(2+). Arginine 202 is a binding site for substrate.

The protein belongs to the HPS/KGPDC family. KGPDC subfamily. Homodimer. Mg(2+) is required as a cofactor.

The enzyme catalyses 3-dehydro-L-gulonate 6-phosphate + H(+) = L-xylulose 5-phosphate + CO2. Functionally, catalyzes the decarboxylation of 3-keto-L-gulonate-6-P into L-xylulose-5-P. The polypeptide is Probable 3-keto-L-gulonate-6-phosphate decarboxylase (sgbH) (Haemophilus influenzae (strain ATCC 51907 / DSM 11121 / KW20 / Rd)).